Reading from the N-terminus, the 240-residue chain is tRNA pseudouridine synthase B (240 aa).

The active-site Nucleophile is Asp48.

The protein belongs to the pseudouridine synthase TruB family. Type 1 subfamily.

The enzyme catalyses uridine(55) in tRNA = pseudouridine(55) in tRNA. Functionally, responsible for synthesis of pseudouridine from uracil-55 in the psi GC loop of transfer RNAs. In Bacteroides thetaiotaomicron (strain ATCC 29148 / DSM 2079 / JCM 5827 / CCUG 10774 / NCTC 10582 / VPI-5482 / E50), this protein is tRNA pseudouridine synthase B.